Consider the following 629-residue polypeptide: tRNA uridine 5-carboxymethylaminomethyl modification enzyme MnmG (629 aa).

4-9 serves as a coordination point for FAD; sequence GGGHAG. NAD(+) is bound at residue 268 to 282; that stretch reads GPRYCPSIEDKVNRF.

This sequence belongs to the MnmG family. In terms of assembly, homodimer. Heterotetramer of two MnmE and two MnmG subunits. Requires FAD as cofactor.

The protein resides in the cytoplasm. NAD-binding protein involved in the addition of a carboxymethylaminomethyl (cmnm) group at the wobble position (U34) of certain tRNAs, forming tRNA-cmnm(5)s(2)U34. This chain is tRNA uridine 5-carboxymethylaminomethyl modification enzyme MnmG, found in Helicobacter hepaticus (strain ATCC 51449 / 3B1).